An 814-amino-acid chain; its full sequence is DNA gyrase subunit A (814 aa).

In terms of domain architecture, Topo IIA-type catalytic spans 32 to 499 (LPDVRDGLKP…GVIEFREEDL (468 aa)). Catalysis depends on Y120, which acts as the O-(5'-phospho-DNA)-tyrosine intermediate. The GyrA-box signature appears at 526–532 (QHRAGRG).

Belongs to the type II topoisomerase GyrA/ParC subunit family. Heterotetramer, composed of two GyrA and two GyrB chains. In the heterotetramer, GyrA contains the active site tyrosine that forms a transient covalent intermediate with DNA, while GyrB binds cofactors and catalyzes ATP hydrolysis.

Its subcellular location is the cytoplasm. The enzyme catalyses ATP-dependent breakage, passage and rejoining of double-stranded DNA.. Functionally, a type II topoisomerase that negatively supercoils closed circular double-stranded (ds) DNA in an ATP-dependent manner to modulate DNA topology and maintain chromosomes in an underwound state. Negative supercoiling favors strand separation, and DNA replication, transcription, recombination and repair, all of which involve strand separation. Also able to catalyze the interconversion of other topological isomers of dsDNA rings, including catenanes and knotted rings. Type II topoisomerases break and join 2 DNA strands simultaneously in an ATP-dependent manner. The polypeptide is DNA gyrase subunit A (Dehalogenimonas lykanthroporepellens (strain ATCC BAA-1523 / JCM 15061 / BL-DC-9)).